Reading from the N-terminus, the 429-residue chain is Endo-1,4-beta-xylanase 1 (429 aa).

An N-terminal signal peptide occupies residues 1-19 (MQTKSILTAALLAAAPASA). The GH10 domain maps to 43–336 (NSDQQYNRIL…KPAWTSISSV (294 aa)). Residue E150 is the Proton donor of the active site. E257 acts as the Nucleophile in catalysis. Residues C286 and C292 are joined by a disulfide bond. A disordered region spans residues 364 to 395 (TTPPPISSPIVPSTTTTSAVPTTTVSPPEPEQ). Residues 371 to 389 (SPIVPSTTTTSAVPTTTVS) are compositionally biased toward low complexity. The region spanning 393-429 (PEQTRWGQCGGIGWNGPTKCQSPWTCTRLNDWYFQCL) is the CBM1 domain.

It belongs to the glycosyl hydrolase 10 (cellulase F) family.

Its subcellular location is the secreted. The catalysed reaction is Endohydrolysis of (1-&gt;4)-beta-D-xylosidic linkages in xylans.. The protein operates within glycan degradation; xylan degradation. In terms of biological role, endo-1,4-beta-xylanase involved in the hydrolysis of xylan, a major structural heterogeneous polysaccharide found in plant biomass representing the second most abundant polysaccharide in the biosphere, after cellulose. This Humicola insolens (Soft-rot fungus) protein is Endo-1,4-beta-xylanase 1.